We begin with the raw amino-acid sequence, 104 residues long: Cell division protein FtsL (104 aa).

Over 1-19 (MSTPNTHLLCLIATDLRKH) the chain is Cytoplasmic. Residues 20–39 (FFAVLVGMLIVCSAIYNVYT) traverse the membrane as a helical segment. Residues 40–104 (THKTRGLVTQ…KKNSVLVELR (65 aa)) lie on the Periplasmic side of the membrane.

It belongs to the FtsL family. As to quaternary structure, part of a complex composed of FtsB, FtsL and FtsQ.

Its subcellular location is the cell inner membrane. In terms of biological role, essential cell division protein. May link together the upstream cell division proteins, which are predominantly cytoplasmic, with the downstream cell division proteins, which are predominantly periplasmic. The protein is Cell division protein FtsL of Psychromonas ingrahamii (strain DSM 17664 / CCUG 51855 / 37).